The following is a 979-amino-acid chain: Glycine dehydrogenase (decarboxylating) (979 aa).

The residue at position 726 (Lys-726) is an N6-(pyridoxal phosphate)lysine.

This sequence belongs to the GcvP family. In terms of assembly, the glycine cleavage system is composed of four proteins: P, T, L and H. The cofactor is pyridoxal 5'-phosphate.

The catalysed reaction is N(6)-[(R)-lipoyl]-L-lysyl-[glycine-cleavage complex H protein] + glycine + H(+) = N(6)-[(R)-S(8)-aminomethyldihydrolipoyl]-L-lysyl-[glycine-cleavage complex H protein] + CO2. Functionally, the glycine cleavage system catalyzes the degradation of glycine. The P protein binds the alpha-amino group of glycine through its pyridoxal phosphate cofactor; CO(2) is released and the remaining methylamine moiety is then transferred to the lipoamide cofactor of the H protein. The protein is Glycine dehydrogenase (decarboxylating) of Ralstonia pickettii (strain 12J).